Consider the following 406-residue polypeptide: Putative 12-oxophytodienoate reductase 12 (406 aa).

Residues 41-43 (PLT), Ala-74, and Gln-119 contribute to the FMN site. 188–191 (HAAN) provides a ligand contact to substrate. FMN contacts are provided by residues Arg-240, Gly-317, and 338–339 (GR).

It belongs to the NADH:flavin oxidoreductase/NADH oxidase family. FMN serves as cofactor.

Putative oxophytodienoate reductase that may be involved in the biosynthesis or metabolism of oxylipin signaling molecules. This chain is Putative 12-oxophytodienoate reductase 12 (OPR12), found in Oryza sativa subsp. japonica (Rice).